The primary structure comprises 1149 residues: MACPWNFLWKLKSSRYDLTEEKDINNNVGKASHLYSPEIQDDPKYCSPGKHQNGSSQSLTGTAKKVPESQSKPHKPSPTCSQHMKIKNWGNGMILQDTLHTKAKTNFTCKPKSCLGSVMNPRSMTRGPRDTPIPPDELLPQAIEFVNQYYDSFKEAKIEEYLARVETVTKEIETTGTYQLTGDELIFATKLAWRNAPRCIGRIQWSNLQVFDARSCHTAQEMFEHICRHVRYSTNNGNIRSAITVFPQRTDGKHDFRVWNAQLIRYAGYQMPDGTIQGDPANLEFTQLCIDLGWKPRYGRFDVLPLILQADGRDPELFEIPPDLVLEVPMEHPKYEWFQDLGLKWYALPAVANMLLEVGGLEFPACPFNGWYMGTEIGVRDFCDAQRYNILEEVGRRMGLETHTLASLWKDRAVTEINVAVLHSFQKQNVTIMDHHSAAESFMKHMQNEYRARGGCPADWIWLVPPISGSITPVFHQEMLNYILSPFYYYQVEAWKTHVWQDETRRPKRREIPFRVLAKATLFASLLMRKMMASRVRATILFATETGKSEALAQDLGALFSCAFNPKVLCMDQYQLSSLEEEKLLLVVTSTFGNGDCPGNGETLKKSLFVLKKLTNTFRYAVFGLGSSMYPRFCAFAHDIDIKLSQLGASQLTPVGEGDELSGQEDAFCTWAVQTFQAACAAFDVRGRHHITIPKRYTSSVTWEPYHYRLVQDSQPLDLNKALSRMHATDVFTMRLKSQKNLQSPKSSRTTLLMELSCDDSRSLAYLPGEHLGVFPCNQPALVQGILECVVDNPGPHHTVCLEVLDDSGSYWAKDKRLPPCSLSQALTYFLDITTPPTQLQLQKLARLATEQAERLRLESLSQPSEYNKWKFTNSPTFLEVLEEFPSLRVPAAFLLSQLPILKPRYYSISSSLDHTPAEVHLTVAVVTYRTRDGRGPLHHGVCSTWFSGLKPQDPVPCLVRSVNSFQLPKDPSQPCILIGPGTGIAPFRSFWQQRLHNLKHTGLQGGRMTLLFGCRHPEEDHIYKEEMQEMVQKGVLHEVHTAYSRLPGKPKAYVQDILRQQLAREVLRVLHEEPGHLYVCGNVLMAQDVACTLKQLLAAKLNLNEEQVEDYFFQLKSQKRYHEDIFGAVFPHGVKKDRAERPPGDDKL.

The interval 22–83 is disordered; it reads KDINNNVGKA…HKPSPTCSQH (62 aa). The DINNN-motif; mediates interaction with SPSB1, SPSB2 and SPSB4 motif lies at 23 to 27; sequence DINNN. Positions 50 to 61 are enriched in polar residues; it reads KHQNGSSQSLTG. Zn(2+) contacts are provided by Cys109 and Cys114. Ser117 is a binding site for (6R)-L-erythro-5,6,7,8-tetrahydrobiopterin. Cys199 contacts heme b. The L-arginine site is built by Gln262, Trp371, Tyr372, and Glu376. Positions 380, 461, 462, and 475 each coordinate (6R)-L-erythro-5,6,7,8-tetrahydrobiopterin. Tyr490 provides a ligand contact to heme b. Positions 514–534 are calmodulin-binding; sequence FRVLAKATLFASLLMRKMMAS. A Flavodoxin-like domain is found at 538–676; sequence ATILFATETG…AFCTWAVQTF (139 aa). Residues Thr544, Glu545, Thr546, Lys548, and Ser549 each coordinate FMN. Tyr574 is subject to Phosphotyrosine. FMN contacts are provided by Ser590, Thr591, Ser627, Arg632, Cys634, Glu660, and Gln664. In terms of domain architecture, FAD-binding FR-type spans 729-969; sequence TDVFTMRLKS…VRSVNSFQLP (241 aa). Residue Arg749 coordinates NADP(+). The FAD site is built by His771, Arg905, Tyr907, Ser908, Thr923, and Ala925. NADP(+) is bound at residue Thr928. Positions 929, 942, 943, and 944 each coordinate FAD. NADP(+) contacts are provided by Thr983, Arg1016, Ser1045, Arg1046, Lys1052, Tyr1054, Gln1056, and Asp1089.

Belongs to the NOS family. As to quaternary structure, homodimer. Interacts with NHERF1. Interacts with GAPDH; induced by oxidatively-modified low-densitity lipoprotein (LDL(ox)). Interacts with S100A8 and S100A9 to form the iNOS-S100A8/9 transnitrosylase complex. Interacts with SPSB1, SPSB2 and SPSB4. Interacts with ELOC and CUL5 in the presence of SPSB1 or SPSB2 or SPSB4. Forms a complex with ASL, ASS1 and HSP90AA1; the complex regulates cell-autonomous L-arginine synthesis and citrulline recycling while channeling extracellular L-arginine to nitric oxide synthesis pathway. It depends on heme b as a cofactor. FAD is required as a cofactor. Requires FMN as cofactor. (6R)-L-erythro-5,6,7,8-tetrahydrobiopterin serves as cofactor. Post-translationally, polyubiquitinated; mediated by SPSB1, SPSB2 and SPSB4, leading to proteasomal degradation. As to expression, expressed in the lung and colon. Not detected in the heart, aorta, liver, kidney, and spleen.

The protein resides in the cytoplasm. It localises to the cytosol. The enzyme catalyses 2 L-arginine + 3 NADPH + 4 O2 + H(+) = 2 L-citrulline + 2 nitric oxide + 3 NADP(+) + 4 H2O. With respect to regulation, regulated by calcium/calmodulin. Produces nitric oxide (NO) which is a messenger molecule with diverse functions throughout the body. In macrophages, NO mediates tumoricidal and bactericidal actions. Also has nitrosylase activity and mediates cysteine S-nitrosylation of cytoplasmic target proteins such PTGS2/COX2. As component of the iNOS-S100A8/9 transnitrosylase complex involved in the selective inflammatory stimulus-dependent S-nitrosylation of GAPDH implicated in regulation of the GAIT complex activity and probably multiple targets including ANXA5, EZR, MSN and VIM. Involved in inflammation, enhances the synthesis of pro-inflammatory mediators such as IL6 and IL8. This is Nitric oxide synthase, inducible (NOS2) from Cavia porcellus (Guinea pig).